The following is a 537-amino-acid chain: Exoglucanase 1 (537 aa).

The N-terminal stretch at 1-18 is a signal peptide; the sequence is MKGSISYQIYKGALLLSA. Residues 19–453 form a catalytic region; it reads LLNSVSAQQV…YVIYSNIKTG (435 aa). N-linked (GlcNAc...) asparagine glycosylation occurs at N136. The active-site Nucleophile is E235. E240 functions as the Proton donor in the catalytic mechanism. N-linked (GlcNAc...) asparagine glycans are attached at residues N414 and N456. A linker region spans residues 454 to 477; the sequence is PLNSTFTGGTTSSSSTTTTTSKST. Over residues 458–502 the composition is skewed to low complexity; that stretch reads TFTGGTTSSSSTTTTTSKSTSTSSSSKTTTTVTTTTTSSGSSGTG. A disordered region spans residues 458–503; sequence TFTGGTTSSSSTTTTTSKSTSTSSSSKTTTTVTTTTTSSGSSGTGA. The CBM1 domain maps to 501-537; it reads TGARDWAQCGGNGWTGPTTCVSPYTCTKQNDWYSQCL. 2 cysteine pairs are disulfide-bonded: C509–C526 and C520–C536.

It belongs to the glycosyl hydrolase 7 (cellulase C) family.

It localises to the secreted. It carries out the reaction Hydrolysis of (1-&gt;4)-beta-D-glucosidic linkages in cellulose and cellotetraose, releasing cellobiose from the non-reducing ends of the chains.. The polypeptide is Exoglucanase 1 (cbh1) (Penicillium janthinellum (Penicillium vitale)).